The sequence spans 546 residues: ATP synthase subunit alpha (546 aa).

ATP is bound at residue 172 to 179 (GDRKTGKT).

Belongs to the ATPase alpha/beta chains family. In terms of assembly, F-type ATPases have 2 components, CF(1) - the catalytic core - and CF(0) - the membrane proton channel. CF(1) has five subunits: alpha(3), beta(3), gamma(1), delta(1), epsilon(1). CF(0) has three main subunits: a(1), b(2) and c(9-12). The alpha and beta chains form an alternating ring which encloses part of the gamma chain. CF(1) is attached to CF(0) by a central stalk formed by the gamma and epsilon chains, while a peripheral stalk is formed by the delta and b chains.

Its subcellular location is the cell membrane. It carries out the reaction ATP + H2O + 4 H(+)(in) = ADP + phosphate + 5 H(+)(out). Produces ATP from ADP in the presence of a proton gradient across the membrane. The alpha chain is a regulatory subunit. The protein is ATP synthase subunit alpha of Corynebacterium efficiens (strain DSM 44549 / YS-314 / AJ 12310 / JCM 11189 / NBRC 100395).